Consider the following 504-residue polypeptide: Probable cytosol aminopeptidase (504 aa).

The Mn(2+) site is built by Lys-263 and Asp-268. The active site involves Lys-275. The Mn(2+) site is built by Asp-286, Asp-345, and Glu-347. Arg-349 is a catalytic residue.

This sequence belongs to the peptidase M17 family. The cofactor is Mn(2+).

It is found in the cytoplasm. It catalyses the reaction Release of an N-terminal amino acid, Xaa-|-Yaa-, in which Xaa is preferably Leu, but may be other amino acids including Pro although not Arg or Lys, and Yaa may be Pro. Amino acid amides and methyl esters are also readily hydrolyzed, but rates on arylamides are exceedingly low.. The enzyme catalyses Release of an N-terminal amino acid, preferentially leucine, but not glutamic or aspartic acids.. Its function is as follows. Presumably involved in the processing and regular turnover of intracellular proteins. Catalyzes the removal of unsubstituted N-terminal amino acids from various peptides. In Sulfurihydrogenibium sp. (strain YO3AOP1), this protein is Probable cytosol aminopeptidase.